The primary structure comprises 858 residues: MAYPFSTIEPKWQKYWEENKTFKTVEDKNYPKDKRLYILDMFPYPSGDGLHVGHPEGYTATDIYSRFLRMSGYNVLHPMGFDSFGLPAENYAIKTGIHPLITTRKNMETFRKQIKSIGLSYDWDREISTSEESYYKWTQWIFLQLFKKGLAYEKEAPINWCPSCLTGLANEEVKDGKCERCGAQIQRKNLRQWILKITEYAERLLEDLDELDWPESIKIMQKNWIGKSTGAEVDFALVDKDGKETGQKIKVYTTRPDTIFGATYMVLAPEHELVKSITTSNQEKAVAAYIEEAAKKSDLERTDLAKNKTGVFTGAYAINPLTEQKIPVWISDYILISYGTGAIMAVPAHDERDFEFAAQFNLPKIKVVAGAEEWESGKRDFSEEPKACTTEDGYSVNSKQFDGLKTEEAKTKITEHLENLGIAKRAVNYKLRDWIFSRQRYWGEPIPLVHCPSCGIVPLNEHDLPLTLPQVESYAPTGTGESPLAAIDSWVNTKCPKCGKEAKRETNTMPQWAGSCWYYLRFIDPHNNEAFADKEKCDYWMPVDLYVGGTEHAVLHLLYARFWHKVLYDLGLVSTKEPFTRLINQGMITSFAYMRKNKSLVPVDKVKKISETEFEDIETGEKLEQVIAKMSKSLKNVINPDDIIKEYGADTLRLYEMFLGPLEVSKPWNTSGIMGVFRFLEKIWNLSDREIYKTPVNDTSTPETKTLTVLLNKTIKKVTEDTASLNFNTAISQMMIFINEVSKHKKIPHYVWYNFVKLLNPYAPHLAEELWQKMGNDESIAYSHWPMFVEKFCVDQTCTVVVQVNGKLRGKFEAEAGTSKEELERLALSNEGAIRNIEGKEIKKIITVPDKLVNIVVQ.

A 'HIGH' region motif is present at residues 43-54; it reads PYPSGDGLHVGH. The short motif at 629–633 is the 'KMSKS' region element; it reads KMSKS. Residue lysine 632 participates in ATP binding.

Belongs to the class-I aminoacyl-tRNA synthetase family.

The protein resides in the cytoplasm. The catalysed reaction is tRNA(Leu) + L-leucine + ATP = L-leucyl-tRNA(Leu) + AMP + diphosphate. This is Leucine--tRNA ligase from Treponema denticola (strain ATCC 35405 / DSM 14222 / CIP 103919 / JCM 8153 / KCTC 15104).